The sequence spans 330 residues: Serpentine receptor class J-38 (330 aa).

The next 7 helical transmembrane spans lie at 6–26 (IYIFLPRISCALAWVVNPIFV), 43–63 (LLLFFALFNLLYSVVNVVVPI), 98–118 (LVASSYALLLVHFIYRFLVIY), 135–155 (LLLSVAYFVAWQTICWFLGYA), 200–220 (TIIWSSISVASISAYMVLALL), 253–273 (IPIVISFSPCLLCWYTPIFGI), and 285–305 (GALGLFSFVDPIAIILCLPIF).

Belongs to the nematode receptor-like protein srj family.

Its subcellular location is the membrane. The polypeptide is Serpentine receptor class J-38 (srj-38) (Caenorhabditis elegans).